The chain runs to 152 residues: Ribonuclease pancreatic (152 aa).

Positions 1–24 are cleaved as a signal peptide; the sequence is MALDKSVILLPLLVLVLLVLGCLG. Substrate is bound by residues lysine 31 and arginine 34. The Proton acceptor role is filled by histidine 36. An N-linked (GlcNAc...) asparagine glycan is attached at asparagine 46. 4 disulfide bridges follow: cysteine 50-cysteine 108, cysteine 64-cysteine 119, cysteine 82-cysteine 134, and cysteine 89-cysteine 96. Substrate contacts are provided by residues 65–69, lysine 90, and arginine 109; that span reads KPVNT. N-linked (GlcNAc...) asparagine glycosylation occurs at asparagine 112. Histidine 143 serves as the catalytic Proton donor.

The protein belongs to the pancreatic ribonuclease family. In terms of assembly, monomer. Interacts with and forms tight 1:1 complexes with RNH1. Dimerization of two such complexes may occur. Interaction with RNH1 inhibits this protein.

It localises to the secreted. The enzyme catalyses an [RNA] containing cytidine + H2O = an [RNA]-3'-cytidine-3'-phosphate + a 5'-hydroxy-ribonucleotide-3'-[RNA].. It carries out the reaction an [RNA] containing uridine + H2O = an [RNA]-3'-uridine-3'-phosphate + a 5'-hydroxy-ribonucleotide-3'-[RNA].. In terms of biological role, endonuclease that catalyzes the cleavage of RNA on the 3' side of pyrimidine nucleotides. Acts on single-stranded and double-stranded RNA. The sequence is that of Ribonuclease pancreatic (RNASE1) from Papio hamadryas (Hamadryas baboon).